We begin with the raw amino-acid sequence, 286 residues long: Elongation factor Ts (286 aa).

Positions threonine 82 to valine 85 are involved in Mg(2+) ion dislocation from EF-Tu. The segment at valine 212–lysine 286 is disordered. A compositionally biased stretch (polar residues) spans glutamine 215–glutamine 227. Positions glutamate 253–threonine 269 are enriched in low complexity.

It belongs to the EF-Ts family.

The protein resides in the cytoplasm. Associates with the EF-Tu.GDP complex and induces the exchange of GDP to GTP. It remains bound to the aminoacyl-tRNA.EF-Tu.GTP complex up to the GTP hydrolysis stage on the ribosome. The protein is Elongation factor Ts of Gloeothece citriformis (strain PCC 7424) (Cyanothece sp. (strain PCC 7424)).